The primary structure comprises 884 residues: Alanine--tRNA ligase (884 aa).

The Zn(2+) site is built by His-568, His-572, Cys-670, and His-674.

The protein belongs to the class-II aminoacyl-tRNA synthetase family. Requires Zn(2+) as cofactor.

The protein resides in the cytoplasm. The enzyme catalyses tRNA(Ala) + L-alanine + ATP = L-alanyl-tRNA(Ala) + AMP + diphosphate. In terms of biological role, catalyzes the attachment of alanine to tRNA(Ala) in a two-step reaction: alanine is first activated by ATP to form Ala-AMP and then transferred to the acceptor end of tRNA(Ala). Also edits incorrectly charged Ser-tRNA(Ala) and Gly-tRNA(Ala) via its editing domain. This is Alanine--tRNA ligase from Synechococcus sp. (strain JA-2-3B'a(2-13)) (Cyanobacteria bacterium Yellowstone B-Prime).